A 242-amino-acid chain; its full sequence is Pyridoxine 5'-phosphate synthase (242 aa).

A 3-amino-2-oxopropyl phosphate-binding site is contributed by Asn6. 8-9 (DH) provides a ligand contact to 1-deoxy-D-xylulose 5-phosphate. Arg17 contacts 3-amino-2-oxopropyl phosphate. His42 functions as the Proton acceptor in the catalytic mechanism. 2 residues coordinate 1-deoxy-D-xylulose 5-phosphate: Arg44 and His49. Glu69 functions as the Proton acceptor in the catalytic mechanism. Position 99 (Thr99) interacts with 1-deoxy-D-xylulose 5-phosphate. His190 acts as the Proton donor in catalysis. 3-amino-2-oxopropyl phosphate-binding positions include Gly191 and 212–213 (GH).

Belongs to the PNP synthase family. Homooctamer; tetramer of dimers.

Its subcellular location is the cytoplasm. The enzyme catalyses 3-amino-2-oxopropyl phosphate + 1-deoxy-D-xylulose 5-phosphate = pyridoxine 5'-phosphate + phosphate + 2 H2O + H(+). It functions in the pathway cofactor biosynthesis; pyridoxine 5'-phosphate biosynthesis; pyridoxine 5'-phosphate from D-erythrose 4-phosphate: step 5/5. Functionally, catalyzes the complicated ring closure reaction between the two acyclic compounds 1-deoxy-D-xylulose-5-phosphate (DXP) and 3-amino-2-oxopropyl phosphate (1-amino-acetone-3-phosphate or AAP) to form pyridoxine 5'-phosphate (PNP) and inorganic phosphate. The protein is Pyridoxine 5'-phosphate synthase of Neisseria meningitidis serogroup C.